The primary structure comprises 294 residues: Protease HtpX (294 aa).

Transmembrane regions (helical) follow at residues 4 to 24 and 33 to 53; these read ILLFILTNLSVMIIFGIILFI and FGLIIMSGVFGFGGSIISLLL. Residue His139 coordinates Zn(2+). Glu140 is a catalytic residue. His143 is a binding site for Zn(2+). The next 2 helical transmembrane spans lie at 147–167 and 197–217; these read GDMITMTLIQGVVNTFVIFLS and FFISMALEVVFGILASIITFW. A Zn(2+)-binding site is contributed by Glu223.

It belongs to the peptidase M48B family. The cofactor is Zn(2+).

The protein resides in the cell membrane. The chain is Protease HtpX from Wigglesworthia glossinidia brevipalpis.